The primary structure comprises 207 residues: MPKLESYKRVHTEELYFPNDQKLWKEQQEALVLLEKFNQTSVTQPEQQMELLKKMFSEIGENCFIQPPFYANFGGKNVHFGTGIYANFNLTLVDDTDIFVGNHVMFGPNVTIDTATHPVSPDLRKRGAQYNKKVYIEENVWLGAGVIVLPGVRIGKNSVIGAGSLVTKDIPDNVVAFGTPCMVKRKINDSDFKTYDHGKKIDLDEFI.

Position 87 (N87) interacts with acetyl-CoA. H117 functions as the Proton donor/acceptor in the catalytic mechanism. Residues A144, A162, 167 to 168, and R185 contribute to the acetyl-CoA site; that span reads TK.

This sequence belongs to the transferase hexapeptide repeat family. Homotrimer.

It is found in the cytoplasm. The catalysed reaction is a beta-D-galactoside + acetyl-CoA = a 6-acetyl-beta-D-galactoside + CoA. This chain is Galactoside O-acetyltransferase (lacA), found in Lactococcus lactis subsp. lactis (strain IL1403) (Streptococcus lactis).